The primary structure comprises 325 residues: Glutarate 2-hydroxylase (325 aa).

Fe cation contacts are provided by H160, D162, and H292.

Belongs to the glutarate hydroxylase family. As to quaternary structure, homotetramer. Fe(2+) is required as a cofactor.

The enzyme catalyses glutarate + 2-oxoglutarate + O2 = (S)-2-hydroxyglutarate + succinate + CO2. The protein operates within amino-acid degradation. In terms of biological role, acts as an alpha-ketoglutarate-dependent dioxygenase catalyzing hydroxylation of glutarate (GA) to L-2-hydroxyglutarate (L2HG). Functions in a L-lysine degradation pathway that proceeds via cadaverine, glutarate and L-2-hydroxyglutarate. The sequence is that of Glutarate 2-hydroxylase from Escherichia coli (strain K12 / MC4100 / BW2952).